Reading from the N-terminus, the 72-residue chain is Subtilisin-chymotrypsin inhibitor-2B (72 aa).

The protein belongs to the protease inhibitor I13 (potato type I serine protease inhibitor) family.

Inhibits both subtilisin and chymotrypsin. The polypeptide is Subtilisin-chymotrypsin inhibitor-2B (Hordeum vulgare (Barley)).